Here is a 151-residue protein sequence, read N- to C-terminus: Ribosome maturation factor RimP (151 aa).

The protein belongs to the RimP family.

Its subcellular location is the cytoplasm. In terms of biological role, required for maturation of 30S ribosomal subunits. This is Ribosome maturation factor RimP from Aliivibrio salmonicida (strain LFI1238) (Vibrio salmonicida (strain LFI1238)).